The sequence spans 194 residues: Adenylate kinase isoenzyme 1 (194 aa).

N-acetylmethionine is present on Met-1. 18 to 23 is an ATP binding site; the sequence is GSGKGT. Ser-38 carries the post-translational modification Phosphoserine. The tract at residues 38–67 is NMP; that stretch reads STGDLLRAEVSSGSARGKMLSEIMEKGQLV. Residues Thr-39, Arg-44, 65-67, 94-97, and Gln-101 each bind AMP; these read QLV and GYPR. The segment at 131–141 is LID; it reads KRGETSGRVDD. Arg-132 lines the ATP pocket. Arg-138 and Arg-149 together coordinate AMP. Gly-177 provides a ligand contact to ATP.

The protein belongs to the adenylate kinase family. AK1 subfamily. As to quaternary structure, monomer. Mg(2+) serves as cofactor.

Its subcellular location is the cytoplasm. It catalyses the reaction a ribonucleoside 5'-phosphate + ATP = a ribonucleoside 5'-diphosphate + ADP. The enzyme catalyses AMP + ATP = 2 ADP. The catalysed reaction is dAMP + ATP = dADP + ADP. It carries out the reaction dATP + AMP = dADP + ADP. It catalyses the reaction dAMP + dATP = 2 dADP. The enzyme catalyses a 2'-deoxyribonucleoside 5'-diphosphate + ATP = a 2'-deoxyribonucleoside 5'-triphosphate + ADP. The catalysed reaction is a ribonucleoside 5'-diphosphate + ATP = a ribonucleoside 5'-triphosphate + ADP. It carries out the reaction CDP + GTP = CTP + GDP. It catalyses the reaction GDP + ATP = GTP + ADP. The enzyme catalyses UDP + ATP = UTP + ADP. The catalysed reaction is GTP + UDP = UTP + GDP. It carries out the reaction dTDP + GTP = dTTP + GDP. It catalyses the reaction dCDP + GTP = dCTP + GDP. The enzyme catalyses dGDP + ATP = dGTP + ADP. The catalysed reaction is dADP + GTP = dATP + GDP. It carries out the reaction thiamine diphosphate + ADP = thiamine triphosphate + AMP. Catalyzes the reversible transfer of the terminal phosphate group between ATP and AMP. Also displays broad nucleoside diphosphate kinase activity. Plays an important role in cellular energy homeostasis and in adenine nucleotide metabolism. Also catalyzes at a very low rate the synthesis of thiamine triphosphate (ThTP) from thiamine diphosphate (ThDP) and ADP. The polypeptide is Adenylate kinase isoenzyme 1 (Bos taurus (Bovine)).